A 252-amino-acid polypeptide reads, in one-letter code: Uridylate kinase (252 aa).

27–30 (KLGG) lines the ATP pocket. G68 is a binding site for UMP. ATP is bound by residues G69 and R73. UMP is bound by residues D88 and 149–156 (MGLPYFST). Y182 and D185 together coordinate ATP.

This sequence belongs to the UMP kinase family. Homohexamer.

The protein localises to the cytoplasm. It catalyses the reaction UMP + ATP = UDP + ADP. It participates in pyrimidine metabolism; CTP biosynthesis via de novo pathway; UDP from UMP (UMPK route): step 1/1. Its activity is regulated as follows. Inhibited by UTP. Catalyzes the reversible phosphorylation of UMP to UDP. This is Uridylate kinase from Mycobacterium sp. (strain JLS).